Reading from the N-terminus, the 1272-residue chain is Presporeless protein A (1272 aa).

A Nuclear localization signal motif is present at residues 146 to 161; it reads KDKRIKPIDPKKKISR. 2 disordered regions span residues 369–403 and 468–490; these read ASTI…DDTS and STSS…NQLK. Over residues 374-392 the composition is skewed to acidic residues; it reads DGEEEDDDDDDNDVDGNDD. Basic and acidic residues predominate over residues 393-403; sequence DNNKEKVDDTS. The span at 468-487 shows a compositional bias: low complexity; the sequence is STSSTNTASSTRSKASSNSN.

The protein localises to the nucleus. Functions autonomously, very early in the prespore pathway, to control prespore cell differentiation, maybe at the level of transcription. Also required for proper aggregation. The chain is Presporeless protein A (pslA) from Dictyostelium discoideum (Social amoeba).